The following is a 102-amino-acid chain: Small ribosomal subunit protein uS10 (102 aa).

The protein belongs to the universal ribosomal protein uS10 family. In terms of assembly, part of the 30S ribosomal subunit.

Its function is as follows. Involved in the binding of tRNA to the ribosomes. This chain is Small ribosomal subunit protein uS10, found in Bacillus anthracis (strain A0248).